A 420-amino-acid chain; its full sequence is Torsin-4A-A (420 aa).

Residues 130-150 (CLLLFIGIVCFQILNAIENLD) traverse the membrane as a helical segment. 202-209 (GPSGVGKS) lines the ATP pocket.

This sequence belongs to the ClpA/ClpB family. Torsin subfamily.

It is found in the membrane. In Xenopus laevis (African clawed frog), this protein is Torsin-4A-A (tor4a-a).